Consider the following 88-residue polypeptide: UPF0495 protein DEHA2C16280g (88 aa).

The helical transmembrane segment at 25-47 (YPLFAAMGVAVASGCFFTYRHFA) threads the bilayer.

The protein belongs to the UPF0495 family.

The protein localises to the membrane. This Debaryomyces hansenii (strain ATCC 36239 / CBS 767 / BCRC 21394 / JCM 1990 / NBRC 0083 / IGC 2968) (Yeast) protein is UPF0495 protein DEHA2C16280g.